Reading from the N-terminus, the 835-residue chain is uncharacterized protein (835 aa).

Disordered stretches follow at residues 1–38 (MKTSRLSTVPTSSSSTSTSSSPSSSSGSGSSTNTVGSR), 317–477 (DFDL…QSGR), 489–668 (SLSK…IKRR), 721–750 (DLENNNNNNSNSNSNSNSNNNSKRSSVSSF), and 810–835 (QEQQEGEQQEERQQEQILDEDDELMF). Composition is skewed to low complexity over residues 7–37 (STVPTSSSSTSTSSSPSSSSGSGSSTNTVGS), 328–351 (NNNNNNDNNNNNNTSTTRSKTPTT), and 361–395 (SSTNTTPTTTTTTTTTTTPNKTQSSSSTSLRSGSS). Polar residues-rich tracts occupy residues 396–406 (IGNRTEVSSSI) and 415–424 (IIRSKSSLGT). Positions 432–442 (GGSGGGGGGGM) are enriched in gly residues. Positions 449–477 (PISKTPTTMITKTASSSSPNLATSTQSGR) are enriched in polar residues. A compositionally biased stretch (low complexity) spans 489-510 (SLSKQSSSSNLTRSLPPIIKSP). The span at 511-521 (ISPPGPTPPAP) shows a compositional bias: pro residues. A compositionally biased stretch (low complexity) spans 522-629 (TLTKSKSTPS…STTSSATKKS (108 aa)). Polar residues predominate over residues 631–640 (ITKTNPTDEQ). 2 stretches are compositionally biased toward low complexity: residues 641–664 (TTTPKSITKTTTTTTTANSTSTSS) and 724–750 (NNNNNNSNSNSNSNSNNNSKRSSVSSF). Residues 826–835 (ILDEDDELMF) are compositionally biased toward acidic residues.

This is an uncharacterized protein from Dictyostelium discoideum (Social amoeba).